The primary structure comprises 353 residues: uncharacterized protein (353 aa).

An N-terminal signal peptide occupies residues 1 to 18; it reads MKFVLFAQLAAVAAPAIA. Residues 94 to 119 are disordered; it reads EGGNVRRVPGGPSQSARQIGDSSTPM. Polar residues predominate over residues 105–119; that stretch reads PSQSARQIGDSSTPM. N-linked (GlcNAc...) asparagine glycans are attached at residues N165 and N312.

The protein belongs to the glycosyl hydrolase 3 family.

The protein resides in the secreted. This is an uncharacterized protein from Arthroderma benhamiae (strain ATCC MYA-4681 / CBS 112371) (Trichophyton mentagrophytes).